The sequence spans 397 residues: Iron-sulfur cluster assembly SufBD family protein Mb1497 (397 aa).

This sequence belongs to the iron-sulfur cluster assembly SufBD family.

The sequence is that of Iron-sulfur cluster assembly SufBD family protein Mb1497 from Mycobacterium bovis (strain ATCC BAA-935 / AF2122/97).